A 241-amino-acid polypeptide reads, in one-letter code: Fatty acid metabolism regulator protein (241 aa).

The HTH gntR-type domain occupies 6–74 (KGPASFAEKY…HGKPTRVNNF (69 aa)). Residues 34–53 (ERELSELIGVTRTTLREVLQ) constitute a DNA-binding region (H-T-H motif).

Homodimer.

The protein resides in the cytoplasm. Functionally, multifunctional regulator of fatty acid metabolism. The polypeptide is Fatty acid metabolism regulator protein (Shewanella sp. (strain MR-4)).